An 874-amino-acid polypeptide reads, in one-letter code: Envelope glycoprotein B (874 aa).

The N-terminal stretch at 1 to 25 (MGVGGGPRVVLCLWCVAALLCQGVA) is a signal peptide. Residues 26 to 727 (QEVVAETTTP…SGVISFFKNP (702 aa)) lie on the Virion surface side of the membrane. Cystine bridges form between cysteine 59–cysteine 523, cysteine 77–cysteine 479, cysteine 149–cysteine 214, cysteine 306–cysteine 353, and cysteine 546–cysteine 583. An involved in fusion and/or binding to host membrane region spans residues 116–122 (IYKGWSE). An N-linked (GlcNAc...) asparagine; by host glycan is attached at asparagine 171. The segment at 200-208 (RNLLWSYTT) is involved in fusion and/or binding to host membrane. Residues asparagine 247, asparagine 281, asparagine 302, asparagine 323, asparagine 348, asparagine 356, asparagine 376, asparagine 409, asparagine 412, asparagine 444, asparagine 558, asparagine 610, and asparagine 624 are each glycosylated (N-linked (GlcNAc...) asparagine; by host). Residues 412-450 (NATASPTSTPTTSPRRRRRDTSSVSGGGNNGDNSTKEES) form a disordered region. The hydrophobic membrane proximal region stretch occupies residues 673 to 725 (LDDSIDHGRDSFIQTLGDIMQDLGTIGKVVVNVASGVFSLFGSIVSGVISFFK). Residues 728 to 748 (FGGMLLIVLIIAGVVVVYLFM) form a helical membrane-spanning segment. At 749–874 (TRSRSIYSAP…VEAGTADTGV (126 aa)) the chain is on the intravirion side. Residues 830–874 (RRGGGGYQRLQRDGSDDEGDYEPLRRQDGGYDDVDVEAGTADTGV) form a disordered region. Positions 836–839 (YQRL) match the Internalization motif motif.

The protein belongs to the herpesviridae glycoprotein B family. As to quaternary structure, homotrimer; disulfide-linked. Binds to heparan sulfate proteoglycans. Interacts with gH/gL heterodimer. Post-translationally, a proteolytic cleavage by host furin generates two subunits that remain linked by disulfide bonds.

The protein localises to the virion membrane. It localises to the host cell membrane. The protein resides in the host endosome membrane. Its subcellular location is the host Golgi apparatus membrane. Functionally, envelope glycoprotein that forms spikes at the surface of virion envelope. Essential for the initial attachment to heparan sulfate moieties of the host cell surface proteoglycans. Involved in fusion of viral and cellular membranes leading to virus entry into the host cell. Following initial binding to its host receptors, membrane fusion is mediated by the fusion machinery composed at least of gB and the heterodimer gH/gL. May be involved in the fusion between the virion envelope and the outer nuclear membrane during virion egress. The chain is Envelope glycoprotein B from Equus caballus (Horse).